Reading from the N-terminus, the 162-residue chain is Ribosome-binding factor A (162 aa).

The interval 124-162 (ARVRSGAKPAGEADPYRESGSGVEPGRDGSIGDDDQPEY) is disordered.

This sequence belongs to the RbfA family. Monomer. Binds 30S ribosomal subunits, but not 50S ribosomal subunits or 70S ribosomes.

The protein resides in the cytoplasm. In terms of biological role, one of several proteins that assist in the late maturation steps of the functional core of the 30S ribosomal subunit. Associates with free 30S ribosomal subunits (but not with 30S subunits that are part of 70S ribosomes or polysomes). Required for efficient processing of 16S rRNA. May interact with the 5'-terminal helix region of 16S rRNA. In Mycolicibacterium paratuberculosis (strain ATCC BAA-968 / K-10) (Mycobacterium paratuberculosis), this protein is Ribosome-binding factor A.